The sequence spans 156 residues: Small ribosomal subunit protein uS7 (156 aa).

It belongs to the universal ribosomal protein uS7 family. Part of the 30S ribosomal subunit. Contacts proteins S9 and S11.

One of the primary rRNA binding proteins, it binds directly to 16S rRNA where it nucleates assembly of the head domain of the 30S subunit. Is located at the subunit interface close to the decoding center, probably blocks exit of the E-site tRNA. In Shewanella sediminis (strain HAW-EB3), this protein is Small ribosomal subunit protein uS7.